The following is a 223-amino-acid chain: Phosphoribosylformylglycinamidine synthase subunit PurQ (223 aa).

The Glutamine amidotransferase type-1 domain maps to 2–223; that stretch reads KVAIIRFPGT…LLENFINFNF (222 aa). The Nucleophile role is filled by Cys-84. Residues His-192 and Glu-194 contribute to the active site.

Part of the FGAM synthase complex composed of 1 PurL, 1 PurQ and 2 PurS subunits.

The protein resides in the cytoplasm. It carries out the reaction N(2)-formyl-N(1)-(5-phospho-beta-D-ribosyl)glycinamide + L-glutamine + ATP + H2O = 2-formamido-N(1)-(5-O-phospho-beta-D-ribosyl)acetamidine + L-glutamate + ADP + phosphate + H(+). It catalyses the reaction L-glutamine + H2O = L-glutamate + NH4(+). Its pathway is purine metabolism; IMP biosynthesis via de novo pathway; 5-amino-1-(5-phospho-D-ribosyl)imidazole from N(2)-formyl-N(1)-(5-phospho-D-ribosyl)glycinamide: step 1/2. Its function is as follows. Part of the phosphoribosylformylglycinamidine synthase complex involved in the purines biosynthetic pathway. Catalyzes the ATP-dependent conversion of formylglycinamide ribonucleotide (FGAR) and glutamine to yield formylglycinamidine ribonucleotide (FGAM) and glutamate. The FGAM synthase complex is composed of three subunits. PurQ produces an ammonia molecule by converting glutamine to glutamate. PurL transfers the ammonia molecule to FGAR to form FGAM in an ATP-dependent manner. PurS interacts with PurQ and PurL and is thought to assist in the transfer of the ammonia molecule from PurQ to PurL. This chain is Phosphoribosylformylglycinamidine synthase subunit PurQ, found in Campylobacter jejuni subsp. jejuni serotype O:2 (strain ATCC 700819 / NCTC 11168).